The following is a 978-amino-acid chain: NACHT, LRR and PYD domains-containing protein 4E (978 aa).

The region spanning 1-93 (MASFFSDFGL…MERAGREIAG (93 aa)) is the Pyrin domain. In terms of domain architecture, NACHT spans 148 to 471 (HMVFLQGVAG…FHLLKSHVDH (324 aa)). Position 154-161 (154-161 (GVAGIGKS)) interacts with ATP. LRR repeat units follow at residues 594-617 (CSTL…HSYT), 694-717 (LLNL…LNQA), 746-773 (SKML…LCHP), 802-825 (NKTL…VLCG), 859-882 (NQNL…LLCD), and 916-940 (CKTL…LFEA).

It belongs to the NLRP family.

In terms of biological role, may be involved in inflammation and recognition of cytosolic pathogen-associated molecular patterns (PAMPs) not intercepted by membrane-bound receptors. This is NACHT, LRR and PYD domains-containing protein 4E (Nlrp4e) from Mus musculus (Mouse).